Here is a 446-residue protein sequence, read N- to C-terminus: Tubulin beta chain (446 aa).

GTP contacts are provided by Gln11, Glu69, Ser138, Gly142, Thr143, Gly144, Asn204, and Asn226. Glu69 provides a ligand contact to Mg(2+). Positions 425–446 (YQEASISEGEEEYPEEVSNEEE) are disordered. Over residues 432–446 (EGEEEYPEEVSNEEE) the composition is skewed to acidic residues.

The protein belongs to the tubulin family. In terms of assembly, dimer of alpha and beta chains. A typical microtubule is a hollow water-filled tube with an outer diameter of 25 nm and an inner diameter of 15 nM. Alpha-beta heterodimers associate head-to-tail to form protofilaments running lengthwise along the microtubule wall with the beta-tubulin subunit facing the microtubule plus end conferring a structural polarity. Microtubules usually have 13 protofilaments but different protofilament numbers can be found in some organisms and specialized cells. Mg(2+) serves as cofactor.

Its subcellular location is the cytoplasm. It is found in the cytoskeleton. Functionally, tubulin is the major constituent of microtubules, a cylinder consisting of laterally associated linear protofilaments composed of alpha- and beta-tubulin heterodimers. Microtubules grow by the addition of GTP-tubulin dimers to the microtubule end, where a stabilizing cap forms. Below the cap, tubulin dimers are in GDP-bound state, owing to GTPase activity of alpha-tubulin. In Blumeria hordei (Barley powdery mildew), this protein is Tubulin beta chain (TUB2).